A 265-amino-acid chain; its full sequence is Mlc titration factor A (265 aa).

Residues His111, His148, His152, and Glu211 each contribute to the Zn(2+) site.

Belongs to the MtfA family. Interacts with Mlc. Requires Zn(2+) as cofactor.

It localises to the cytoplasm. In terms of biological role, involved in the modulation of the activity of the glucose-phosphotransferase system (glucose-PTS). Interacts with the transcriptional repressor Mlc, preventing its interaction with DNA and leading to the modulation of expression of genes regulated by Mlc, including ptsG, which encodes the PTS system glucose-specific EIICB component. Functionally, shows zinc-dependent metallopeptidase activity. The polypeptide is Mlc titration factor A (Escherichia coli O7:K1 (strain IAI39 / ExPEC)).